Here is a 155-residue protein sequence, read N- to C-terminus: 6,7-dimethyl-8-ribityllumazine synthase (155 aa).

Residues Phe23, 57–59 (AFE), and 81–83 (AVI) each bind 5-amino-6-(D-ribitylamino)uracil. Residue 86–87 (ST) coordinates (2S)-2-hydroxy-3-oxobutyl phosphate. His89 functions as the Proton donor in the catalytic mechanism. A 5-amino-6-(D-ribitylamino)uracil-binding site is contributed by Phe114. Arg128 contacts (2S)-2-hydroxy-3-oxobutyl phosphate.

This sequence belongs to the DMRL synthase family.

The catalysed reaction is (2S)-2-hydroxy-3-oxobutyl phosphate + 5-amino-6-(D-ribitylamino)uracil = 6,7-dimethyl-8-(1-D-ribityl)lumazine + phosphate + 2 H2O + H(+). It participates in cofactor biosynthesis; riboflavin biosynthesis; riboflavin from 2-hydroxy-3-oxobutyl phosphate and 5-amino-6-(D-ribitylamino)uracil: step 1/2. In terms of biological role, catalyzes the formation of 6,7-dimethyl-8-ribityllumazine by condensation of 5-amino-6-(D-ribitylamino)uracil with 3,4-dihydroxy-2-butanone 4-phosphate. This is the penultimate step in the biosynthesis of riboflavin. This chain is 6,7-dimethyl-8-ribityllumazine synthase, found in Geobacter sp. (strain M21).